A 232-amino-acid polypeptide reads, in one-letter code: 5'-methylthioadenosine/S-adenosylhomocysteine nucleosidase (232 aa).

Glu-12 functions as the Proton acceptor in the catalytic mechanism. Residues Gly-78, Ile-152, and 173–174 contribute to the substrate site; that span reads ME. The active-site Proton donor is Asp-197.

Belongs to the PNP/UDP phosphorylase family. MtnN subfamily. In terms of assembly, homodimer.

The catalysed reaction is S-adenosyl-L-homocysteine + H2O = S-(5-deoxy-D-ribos-5-yl)-L-homocysteine + adenine. The enzyme catalyses S-methyl-5'-thioadenosine + H2O = 5-(methylsulfanyl)-D-ribose + adenine. It catalyses the reaction 5'-deoxyadenosine + H2O = 5-deoxy-D-ribose + adenine. It participates in amino-acid biosynthesis; L-methionine biosynthesis via salvage pathway; S-methyl-5-thio-alpha-D-ribose 1-phosphate from S-methyl-5'-thioadenosine (hydrolase route): step 1/2. Functionally, catalyzes the irreversible cleavage of the glycosidic bond in both 5'-methylthioadenosine (MTA) and S-adenosylhomocysteine (SAH/AdoHcy) to adenine and the corresponding thioribose, 5'-methylthioribose and S-ribosylhomocysteine, respectively. Also cleaves 5'-deoxyadenosine, a toxic by-product of radical S-adenosylmethionine (SAM) enzymes, into 5-deoxyribose and adenine. Thus, is required for in vivo function of the radical SAM enzymes biotin synthase and lipoic acid synthase, that are inhibited by 5'-deoxyadenosine accumulation. The chain is 5'-methylthioadenosine/S-adenosylhomocysteine nucleosidase from Klebsiella pneumoniae subsp. pneumoniae (strain ATCC 700721 / MGH 78578).